A 135-amino-acid polypeptide reads, in one-letter code: MKKGFLAAGVFAAVAFASGAALAEGDAAAGEKVSKKCLACHTFDQGGANKVGPNLFGVFENTAAHKDDYAYSESYTEMKAKGLTWTEANLAAYVKDPKAFVLEKSGDPKAKSKMTFKLTKDDEIENVIAYLKTLK.

An N-terminal signal peptide occupies residues 1 to 23; it reads MKKGFLAAGVFAAVAFASGAALA. Cys-37, Cys-40, His-41, and Met-114 together coordinate heme c.

Belongs to the cytochrome c family. Post-translationally, binds 1 heme c group covalently per subunit.

In terms of biological role, cytochrome c2 is found mainly in purple, non-sulfur, photosynthetic bacteria where it functions as the electron donor to the oxidized bacteriochlorophyll in the photophosphorylation pathway. However, it may also have a role in the respiratory chain and is found in some non-photosynthetic bacteria. The protein is Cytochrome c2 (cycA) of Rhodospirillum rubrum (strain ATCC 11170 / ATH 1.1.1 / DSM 467 / LMG 4362 / NCIMB 8255 / S1).